A 493-amino-acid polypeptide reads, in one-letter code: Galactose-1-phosphate uridylyltransferase (493 aa).

It belongs to the galactose-1-phosphate uridylyltransferase type 2 family.

The protein localises to the cytoplasm. It catalyses the reaction alpha-D-galactose 1-phosphate + UDP-alpha-D-glucose = alpha-D-glucose 1-phosphate + UDP-alpha-D-galactose. It participates in carbohydrate metabolism; galactose metabolism. This Streptococcus pneumoniae serotype 19F (strain G54) protein is Galactose-1-phosphate uridylyltransferase.